The sequence spans 148 residues: MNKQARHFKIREILQRHSVENQHDLLQLLREQGMSVAQATLSRDCAELGLMRVRVNGSYRMVVPDDNAGRIIKGLVGIEVLSINANETTVIIRTLPGRAHGVGSYLDQLKSPLVLGTIAGDDTVLVIPASVHNISSLIAYIHSNLSKT.

This sequence belongs to the ArgR family.

The protein localises to the cytoplasm. Its pathway is amino-acid biosynthesis; L-arginine biosynthesis [regulation]. In terms of biological role, regulates arginine biosynthesis genes. This Chlorobium chlorochromatii (strain CaD3) protein is Arginine repressor.